Reading from the N-terminus, the 261-residue chain is tRNA pseudouridine synthase A (261 aa).

Asp52 (nucleophile) is an active-site residue. Tyr110 is a substrate binding site.

It belongs to the tRNA pseudouridine synthase TruA family. Homodimer.

It carries out the reaction uridine(38/39/40) in tRNA = pseudouridine(38/39/40) in tRNA. Formation of pseudouridine at positions 38, 39 and 40 in the anticodon stem and loop of transfer RNAs. This is tRNA pseudouridine synthase A from Coxiella burnetii (strain CbuK_Q154) (Coxiella burnetii (strain Q154)).